Reading from the N-terminus, the 329-residue chain is Deoxynucleotidyltransferase terminal-interacting protein 1 (329 aa).

2 disordered regions span residues 1 to 22 (MGATGDAEQPRGPSGAERGGLE) and 147 to 178 (KRGRQAEEECAHRGSPLPKKRKGRPPGHILSS). The important for dimerization stretch occupies residues 56–147 (MTTSFTDPAI…RLTHELPGIK (92 aa)). Residues 147–158 (KRGRQAEEECAH) show a composition bias toward basic and acidic residues. Residues 159 to 173 (RGSPLPKKRKGRPPG) constitute a DNA-binding region (a.T hook). Ser-161 carries the post-translational modification Phosphoserine. The Nuclear localization signal signature appears at 164–170 (PKKRKGR). The segment at 197–316 (REGPKWDPAR…MRKYMETLRT (120 aa)) is important for DNA and nucleosome binding. The segment at residues 216–237 (GSRANKALGMGGTRGRIYIKHP) is a DNA-binding region (H-T-H motif).

In terms of assembly, monomer and homodimer. A minor proportion may form homotrimers. Interacts with ZNF541. Interacts with the terminal deoxynucleotidyltransferase DNTT. Interacts with TRERF1. Identified in a histone deacetylase complex that contains DNTTIP1, HDAC1 and MIDEAS; this complex assembles into a tetramer that contains four copies of each protein chain. Component of a histone deacetylase complex containing DNTTIP1, ZNF541, HDAC1 and HDAC2. Identified in a complex with KCTD19, HDAC1, HDAC2 and ZNF541.

The protein resides in the nucleus. In terms of biological role, increases DNTT terminal deoxynucleotidyltransferase activity (in vitro). Also acts as a transcriptional regulator, binding to the consensus sequence 5'-GNTGCATG-3' following an AT-tract. Associates with RAB20 promoter and positively regulates its transcription. Binds DNA and nucleosomes; may recruit HDAC1 complexes to nucleosomes or naked DNA. This is Deoxynucleotidyltransferase terminal-interacting protein 1 (DNTTIP1) from Pongo abelii (Sumatran orangutan).